A 170-amino-acid polypeptide reads, in one-letter code: Adenine phosphoribosyltransferase (170 aa).

Belongs to the purine/pyrimidine phosphoribosyltransferase family. In terms of assembly, homodimer.

The protein resides in the cytoplasm. It catalyses the reaction AMP + diphosphate = 5-phospho-alpha-D-ribose 1-diphosphate + adenine. Its pathway is purine metabolism; AMP biosynthesis via salvage pathway; AMP from adenine: step 1/1. In terms of biological role, catalyzes a salvage reaction resulting in the formation of AMP, that is energically less costly than de novo synthesis. This Bacillus mycoides (strain KBAB4) (Bacillus weihenstephanensis) protein is Adenine phosphoribosyltransferase.